Consider the following 284-residue polypeptide: Tryptophan 2,3-dioxygenase (284 aa).

Residues Phe53–His57 and Arg119 each bind substrate. Heme is bound at residue His242. Thr256 is a substrate binding site.

The protein belongs to the tryptophan 2,3-dioxygenase family. As to quaternary structure, homotetramer. Heme serves as cofactor.

The catalysed reaction is L-tryptophan + O2 = N-formyl-L-kynurenine. Its pathway is amino-acid degradation; L-tryptophan degradation via kynurenine pathway; L-kynurenine from L-tryptophan: step 1/2. It functions in the pathway siderophore biosynthesis; quinolobactin biosynthesis. Heme-dependent dioxygenase that catalyzes the oxidative cleavage of the L-tryptophan (L-Trp) pyrrole ring and converts L-tryptophan to N-formyl-L-kynurenine. Catalyzes the oxidative cleavage of the indole moiety. Required for synthesis of the siderophore quinolobactin. This Pseudomonas fluorescens protein is Tryptophan 2,3-dioxygenase.